The chain runs to 462 residues: Gamma-aminobutyric acid receptor subunit alpha-5 (462 aa).

The first 31 residues, Met-1 to Ser-31, serve as a signal peptide directing secretion. At Gln-32–Phe-260 the chain is on the extracellular side. N-linked (GlcNAc...) asparagine glycosylation is present at Asn-45. Arg-101 provides a ligand contact to 4-aminobutanoate. The N-linked (GlcNAc...) asparagine glycan is linked to Asn-145. Thr-164 contributes to the 4-aminobutanoate binding site. Residues Cys-173 and Cys-187 are joined by a disulfide bond. Residues Asn-207 and Asn-236 are each glycosylated (N-linked (GlcNAc...) asparagine). A helical membrane pass occupies residues Val-261–Leu-281. Residues Asn-282–Val-286 lie on the Cytoplasmic side of the membrane. The chain crosses the membrane as a helical span at residues Pro-287–Arg-308. At Asn-309–Thr-318 the chain is on the extracellular side. Residues Ala-319 to Thr-340 traverse the membrane as a helical segment. Over Val-341–Lys-427 the chain is Cytoplasmic. Lys-355 is covalently cross-linked (Glycyl lysine isopeptide (Lys-Gly) (interchain with G-Cter in ubiquitin)). The segment at Phe-377–Thr-412 is disordered. A helical membrane pass occupies residues Met-428–Tyr-448. Residues Leu-449 to Lys-462 lie on the Extracellular side of the membrane.

Belongs to the ligand-gated ion channel (TC 1.A.9) family. Gamma-aminobutyric acid receptor (TC 1.A.9.5) subfamily. GABRA5 sub-subfamily. As to quaternary structure, heteropentamer, formed by a combination of alpha (GABRA1-6), beta (GABRB1-3), gamma (GABRG1-3), delta (GABRD), epsilon (GABRE), rho (GABRR1-3), pi (GABRP) and theta (GABRQ) chains, each subunit exhibiting distinct physiological and pharmacological properties.

It is found in the postsynaptic cell membrane. Its subcellular location is the cell membrane. It catalyses the reaction chloride(in) = chloride(out). Functionally, alpha subunit of the heteropentameric ligand-gated chloride channel gated by gamma-aminobutyric acid (GABA), a major inhibitory neurotransmitter in the brain. GABA-gated chloride channels, also named GABA(A) receptors (GABAAR), consist of five subunits arranged around a central pore and contain GABA active binding site(s) located at the alpha and beta subunit interface(s). When activated by GABA, GABAARs selectively allow the flow of chloride anions across the cell membrane down their electrochemical gradient. GABAARs containing alpha-5/GABRA5 subunits are mainly extrasynaptic and contribute to the tonic GABAergic inhibition in the hippocampus. Extrasynaptic alpha-5-containing GABAARs in CA1 pyramidal neurons play a role in learning and memory processes. This chain is Gamma-aminobutyric acid receptor subunit alpha-5, found in Homo sapiens (Human).